We begin with the raw amino-acid sequence, 487 residues long: uncharacterized protein (487 aa).

Disordered stretches follow at residues 35-153 (VSRK…SGDQ), 237-345 (NTTK…AKAL), and 358-395 (QKRK…SSAA). Residues 54 to 96 (FDQEDILDTVPEQTDENEDEAGDDELESEKEELDYDEEEDDED) show a composition bias toward acidic residues. The span at 97-132 (RRERTSRYTSEKKGSRKDSVEGDENKKENGQDETKR) shows a compositional bias: basic and acidic residues. A compositionally biased stretch (basic residues) spans 241-253 (SKSRGRDTRKRRS). The span at 254-264 (SSYSSTSSSSD) shows a compositional bias: low complexity. Composition is skewed to basic and acidic residues over residues 273–338 (SRSD…KHSA) and 358–383 (QKRK…KKEV). A compositionally biased stretch (low complexity) spans 385–395 (TTVSTNTSSAA).

This is an uncharacterized protein from Caenorhabditis elegans.